The sequence spans 126 residues: S-adenosylmethionine decarboxylase proenzyme (126 aa).

Catalysis depends on S63, which acts as the Schiff-base intermediate with substrate; via pyruvic acid. Pyruvic acid (Ser); by autocatalysis is present on S63. H68 functions as the Proton acceptor; for processing activity in the catalytic mechanism. The Proton donor; for catalytic activity role is filled by C83.

This sequence belongs to the prokaryotic AdoMetDC family. Type 1 subfamily. In terms of assembly, heterotetramer of two alpha and two beta chains arranged as a dimer of alpha/beta heterodimers. Pyruvate serves as cofactor. In terms of processing, is synthesized initially as an inactive proenzyme. Formation of the active enzyme involves a self-maturation process in which the active site pyruvoyl group is generated from an internal serine residue via an autocatalytic post-translational modification. Two non-identical subunits are generated from the proenzyme in this reaction, and the pyruvate is formed at the N-terminus of the alpha chain, which is derived from the carboxyl end of the proenzyme. The post-translation cleavage follows an unusual pathway, termed non-hydrolytic serinolysis, in which the side chain hydroxyl group of the serine supplies its oxygen atom to form the C-terminus of the beta chain, while the remainder of the serine residue undergoes an oxidative deamination to produce ammonia and the pyruvoyl group blocking the N-terminus of the alpha chain.

It carries out the reaction S-adenosyl-L-methionine + H(+) = S-adenosyl 3-(methylsulfanyl)propylamine + CO2. Its pathway is amine and polyamine biosynthesis; S-adenosylmethioninamine biosynthesis; S-adenosylmethioninamine from S-adenosyl-L-methionine: step 1/1. Functionally, catalyzes the decarboxylation of S-adenosylmethionine to S-adenosylmethioninamine (dcAdoMet), the propylamine donor required for the synthesis of the polyamines spermine and spermidine from the diamine putrescine. The sequence is that of S-adenosylmethionine decarboxylase proenzyme from Clostridium kluyveri (strain NBRC 12016).